A 376-amino-acid chain; its full sequence is Cytoplasmic tRNA 2-thiolation protein 2 (376 aa).

It belongs to the CTU2/NCS2 family.

It localises to the cytoplasm. It functions in the pathway tRNA modification; 5-methoxycarbonylmethyl-2-thiouridine-tRNA biosynthesis. Functionally, plays a central role in 2-thiolation of mcm(5)S(2)U at tRNA wobble positions of tRNA(Lys), tRNA(Glu) and tRNA(Gln). May act by forming a heterodimer with NCS6 that ligates sulfur from thiocarboxylated URM1 onto the uridine of tRNAs at wobble position. Prior mcm(5) tRNA modification by the elongator complex is required for 2-thiolation. May also be involved in protein urmylation. This Coccidioides immitis (strain RS) (Valley fever fungus) protein is Cytoplasmic tRNA 2-thiolation protein 2.